We begin with the raw amino-acid sequence, 76 residues long: Exodeoxyribonuclease 7 small subunit (76 aa).

Belongs to the XseB family. In terms of assembly, heterooligomer composed of large and small subunits.

Its subcellular location is the cytoplasm. The catalysed reaction is Exonucleolytic cleavage in either 5'- to 3'- or 3'- to 5'-direction to yield nucleoside 5'-phosphates.. Bidirectionally degrades single-stranded DNA into large acid-insoluble oligonucleotides, which are then degraded further into small acid-soluble oligonucleotides. The sequence is that of Exodeoxyribonuclease 7 small subunit from Bacillus mycoides (strain KBAB4) (Bacillus weihenstephanensis).